A 146-amino-acid polypeptide reads, in one-letter code: Arginine vasopressin-induced protein 1 (146 aa).

Disordered stretches follow at residues 1–31 (MGTP…RKQA) and 80–146 (RRKR…QIRH). The segment covering 80–92 (RRKRPPRQNHCSR) has biased composition (basic residues). Polar residues predominate over residues 106–123 (QASTTDTASSEQFGNSRR).

In terms of biological role, may be involved in MAP kinase activation, epithelial sodium channel (ENaC) down-regulation and cell cycling. The polypeptide is Arginine vasopressin-induced protein 1 (Avpi1) (Rattus norvegicus (Rat)).